Consider the following 237-residue polypeptide: UDP-2,3-diacylglucosamine hydrolase (237 aa).

Mn(2+)-binding residues include aspartate 9, histidine 11, aspartate 42, asparagine 80, and histidine 115. Residue asparagine 80–arginine 81 participates in substrate binding. 5 residues coordinate substrate: aspartate 123, serine 161, lysine 165, lysine 168, and histidine 196. Residues histidine 196 and histidine 198 each contribute to the Mn(2+) site.

Belongs to the LpxH family. Requires Mn(2+) as cofactor.

The protein resides in the cell inner membrane. The protein localises to the cytoplasm. It carries out the reaction UDP-2-N,3-O-bis[(3R)-3-hydroxytetradecanoyl]-alpha-D-glucosamine + H2O = 2-N,3-O-bis[(3R)-3-hydroxytetradecanoyl]-alpha-D-glucosaminyl 1-phosphate + UMP + 2 H(+). Its pathway is glycolipid biosynthesis; lipid IV(A) biosynthesis; lipid IV(A) from (3R)-3-hydroxytetradecanoyl-[acyl-carrier-protein] and UDP-N-acetyl-alpha-D-glucosamine: step 4/6. Hydrolyzes the pyrophosphate bond of UDP-2,3-diacylglucosamine to yield 2,3-diacylglucosamine 1-phosphate (lipid X) and UMP by catalyzing the attack of water at the alpha-P atom. Involved in the biosynthesis of lipid A, a phosphorylated glycolipid that anchors the lipopolysaccharide to the outer membrane of the cell. The polypeptide is UDP-2,3-diacylglucosamine hydrolase (Haemophilus influenzae (strain ATCC 51907 / DSM 11121 / KW20 / Rd)).